The primary structure comprises 415 residues: Gamma-glutamyl phosphate reductase (415 aa).

This sequence belongs to the gamma-glutamyl phosphate reductase family.

It is found in the cytoplasm. It catalyses the reaction L-glutamate 5-semialdehyde + phosphate + NADP(+) = L-glutamyl 5-phosphate + NADPH + H(+). Its pathway is amino-acid biosynthesis; L-proline biosynthesis; L-glutamate 5-semialdehyde from L-glutamate: step 2/2. Catalyzes the NADPH-dependent reduction of L-glutamate 5-phosphate into L-glutamate 5-semialdehyde and phosphate. The product spontaneously undergoes cyclization to form 1-pyrroline-5-carboxylate. The chain is Gamma-glutamyl phosphate reductase from Listeria welshimeri serovar 6b (strain ATCC 35897 / DSM 20650 / CCUG 15529 / CIP 8149 / NCTC 11857 / SLCC 5334 / V8).